Here is a 126-residue protein sequence, read N- to C-terminus: NADH-quinone oxidoreductase subunit A (126 aa).

The next 3 membrane-spanning stretches (helical) occupy residues 11–31 (IAIQ…SSWL), 64–84 (FLVA…YPWA), and 98–118 (EGFV…IYVI).

The protein belongs to the complex I subunit 3 family. NDH-1 is composed of 14 different subunits. Subunits NuoA, H, J, K, L, M, N constitute the membrane sector of the complex.

The protein localises to the cell inner membrane. It carries out the reaction a quinone + NADH + 5 H(+)(in) = a quinol + NAD(+) + 4 H(+)(out). Functionally, NDH-1 shuttles electrons from NADH, via FMN and iron-sulfur (Fe-S) centers, to quinones in the respiratory chain. The immediate electron acceptor for the enzyme in this species is believed to be a menaquinone. Couples the redox reaction to proton translocation (for every two electrons transferred, four hydrogen ions are translocated across the cytoplasmic membrane), and thus conserves the redox energy in a proton gradient. The sequence is that of NADH-quinone oxidoreductase subunit A from Cytophaga hutchinsonii (strain ATCC 33406 / DSM 1761 / CIP 103989 / NBRC 15051 / NCIMB 9469 / D465).